The following is a 141-amino-acid chain: Hemoglobin subunit alpha (141 aa).

One can recognise a Globin domain in the interval 1–141 (VLSAADKGNV…VSTVLTSKYR (141 aa)). Ser3 carries the post-translational modification Phosphoserine. Residues Lys7 and Lys11 each carry the N6-succinyllysine modification. Lys16 carries the N6-acetyllysine; alternate modification. Lys16 carries the N6-succinyllysine; alternate modification. Residue Tyr24 is modified to Phosphotyrosine. Ser35 is modified (phosphoserine). N6-succinyllysine is present on Lys40. His58 contributes to the O2 binding site. His87 lines the heme b pocket. Residue Ser102 is modified to Phosphoserine. Thr108 carries the phosphothreonine modification. 2 positions are modified to phosphoserine: Ser124 and Ser131. Thr134 and Thr137 each carry phosphothreonine. At Ser138 the chain carries Phosphoserine.

Belongs to the globin family. In terms of assembly, heterotetramer of two alpha chains and two beta chains. As to expression, red blood cells.

Involved in oxygen transport from the lung to the various peripheral tissues. Functionally, hemopressin acts as an antagonist peptide of the cannabinoid receptor CNR1. Hemopressin-binding efficiently blocks cannabinoid receptor CNR1 and subsequent signaling. The protein is Hemoglobin subunit alpha (HBA) of Macrotus californicus (Californian leaf-nosed bat).